The sequence spans 639 residues: Chaperone protein DnaK (639 aa).

A Phosphothreonine; by autocatalysis modification is found at Thr197. Basic and acidic residues-rich tracts occupy residues Ala514–Glu529 and Gly540–Asp553. Disordered regions lie at residues Ala514–Pro554 and Asp603–Gly639. Over residues Ala612–Asp633 the composition is skewed to acidic residues.

The protein belongs to the heat shock protein 70 family.

Acts as a chaperone. The sequence is that of Chaperone protein DnaK from Jannaschia sp. (strain CCS1).